The following is a 284-amino-acid chain: RNase adapter protein RapZ (284 aa).

Position 8–15 (8–15 (GRSGSGKS)) interacts with ATP. A GTP-binding site is contributed by 56–59 (DVRN). The tract at residues 266-284 (RSRGKNVQSRHRTLEKRKT) is RNA-binding.

Belongs to the RapZ-like family. RapZ subfamily. Homotrimer.

Modulates the synthesis of GlmS, by affecting the processing and stability of the regulatory small RNA GlmZ. When glucosamine-6-phosphate (GlcN6P) concentrations are high in the cell, RapZ binds GlmZ and targets it to cleavage by RNase E. Consequently, GlmZ is inactivated and unable to activate GlmS synthesis. Under low GlcN6P concentrations, RapZ is sequestered and inactivated by an other regulatory small RNA, GlmY, preventing GlmZ degradation and leading to synthesis of GlmS. The polypeptide is RNase adapter protein RapZ (Salmonella arizonae (strain ATCC BAA-731 / CDC346-86 / RSK2980)).